The following is a 317-amino-acid chain: Bile salt hydrolase/transferase (317 aa).

Residue cysteine 2 is the Nucleophile; acyl-thioester intermediate of the active site. Deoxycholate contacts are provided by cysteine 2 and arginine 18. Taurine is bound at residue asparagine 82.

The protein belongs to the peptidase C59 family. In terms of assembly, homotetramer. The tetramer consists of a dimer of dimers.

The catalysed reaction is glycocholate + H2O = cholate + glycine. It catalyses the reaction glycodeoxycholate + H2O = deoxycholate + glycine. The enzyme catalyses chenodeoxycholate + glycine = glycochenodeoxycholate + H2O. It carries out the reaction cholate + taurine = taurocholate + H2O. The catalysed reaction is taurodeoxycholate + H2O = deoxycholate + taurine. It catalyses the reaction taurochenodeoxycholate + H2O = chenodeoxycholate + taurine. The enzyme catalyses an L-alpha-amino acid + cholate = an N-choloyl-L-alpha-amino acid + H2O. It carries out the reaction an L-alpha-amino acid + taurocholate = an N-choloyl-L-alpha-amino acid + taurine. The catalysed reaction is cholate + L-alanine = L-alanocholate + H2O. It catalyses the reaction taurocholate + L-alanine = L-alanocholate + taurine. The enzyme catalyses cholate + L-serine = L-serocholate + H2O. It carries out the reaction taurocholate + L-serine = L-serocholate + taurine. The catalysed reaction is cholate + L-histidine = L-histidocholate + H2O. It catalyses the reaction taurocholate + L-histidine = L-histidocholate + taurine. The protein operates within lipid metabolism; bile acid biosynthesis. Its activity is regulated as follows. Hydrolase activity is competitively inhibited by the products cholate (CA) and deoxycholate (DCA), and by phenylacetate and 4-aminophenylacetate. Penicillin V and penicillin G show mixed inhibition. Strongly inhibited by thiol enzyme inhibitors in vitro. Functionally, possesses dual functions in bile acid metabolism. Acts as a bile salt hydrolase that catalyzes the deconjugation of glycine- and taurine-linked bile salts, which occurs naturally in the intestines of humans, releasing amino acid residues and deconjugated bile salts (bile acids). Can hydrolyze the amide bond in all six major human conjugated bile salts, namely glycocholate (GCA), glycodeoxycholate (GDCA), glycochenodeoxycholate (GCDCA), taurocholate (TCA), taurodeoxycholate (TDCA) and taurochenodeoxycholate (TCDCA). Shows a slight preference for glycine-conjugated bile acids as substrates. Also acts as an amine N-acyltransferase that conjugates a wide variety of amino acids to conjugated and non-conjugated bile acids, thus producing bacterial bile acid amidates (BBAAs) - also named microbially conjugated bile acids (MCBAs) - in the gastrointestinal tract. These BBAAs may facilitate communication between the microbiota and host through the activation of human ligand-activated transcription factors. Is totally inactive toward penicillin V. The chain is Bile salt hydrolase/transferase from Bifidobacterium longum.